The following is a 122-amino-acid chain: SLMQFKTLIMKIAGRSGIWYYGSYGCYCGGGGQGRPQDASDRCCFVHDCCYGKVTGCNPKMDVYTYTEENGAIVCGGDDPCKKQICECDKDAAICFRDNIDTYDNKYWFFPAKNCQEESEPC.

7 cysteine pairs are disulfide-bonded: C26–C115, C28–C44, C43–C95, C49–C122, C50–C88, C57–C81, and C75–C86. Y27, G29, and G31 together coordinate Ca(2+). H47 is a catalytic residue. D48 is a Ca(2+) binding site. D89 is a catalytic residue.

This sequence belongs to the phospholipase A2 family. Group II subfamily. D49 sub-subfamily. The cofactor is Ca(2+). Expressed by the venom gland.

The protein resides in the secreted. The enzyme catalyses a 1,2-diacyl-sn-glycero-3-phosphocholine + H2O = a 1-acyl-sn-glycero-3-phosphocholine + a fatty acid + H(+). PLA2 catalyzes the calcium-dependent hydrolysis of the 2-acyl groups in 3-sn-phosphoglycerides. The chain is Acidic phospholipase A2 A' from Gloydius halys (Chinese water mocassin).